Consider the following 122-residue polypeptide: Large ribosomal subunit protein uL14 (122 aa).

Belongs to the universal ribosomal protein uL14 family. In terms of assembly, part of the 50S ribosomal subunit. Forms a cluster with proteins L3 and L19. In the 70S ribosome, L14 and L19 interact and together make contacts with the 16S rRNA in bridges B5 and B8.

Its function is as follows. Binds to 23S rRNA. Forms part of two intersubunit bridges in the 70S ribosome. This Sulfurimonas denitrificans (strain ATCC 33889 / DSM 1251) (Thiomicrospira denitrificans (strain ATCC 33889 / DSM 1251)) protein is Large ribosomal subunit protein uL14.